The chain runs to 118 residues: Holo-[acyl-carrier-protein] synthase (118 aa).

Residues Asp-8 and Glu-58 each contribute to the Mg(2+) site.

It belongs to the P-Pant transferase superfamily. AcpS family. The cofactor is Mg(2+).

It is found in the cytoplasm. It catalyses the reaction apo-[ACP] + CoA = holo-[ACP] + adenosine 3',5'-bisphosphate + H(+). Functionally, transfers the 4'-phosphopantetheine moiety from coenzyme A to a Ser of acyl-carrier-protein. In Listeria monocytogenes serotype 4b (strain CLIP80459), this protein is Holo-[acyl-carrier-protein] synthase.